The sequence spans 263 residues: Putative steroid dehydrogenase 4 (263 aa).

Residue Tyr154 is the Proton acceptor of the active site.

This sequence belongs to the short-chain dehydrogenases/reductases (SDR) family. 17-beta-HSD 3 subfamily.

The protein is Putative steroid dehydrogenase 4 (stdh-4) of Caenorhabditis elegans.